Reading from the N-terminus, the 428-residue chain is Putative aspergillopepsin A-like aspartic endopeptidase AFUA_2G15950 (428 aa).

Positions 1-19 (MHSLQSFLFLLLLGYGVFA) are cleaved as a signal peptide. A propeptide spans 20–90 (APTSPQAQSQ…GTAANLVTDV (71 aa)) (activation peptide). Residues 110-425 (FVSPVTIGGQ…DLRGPSIGLA (316 aa)) form the Peptidase A1 domain. The active site involves Asp-126. Asn-276 carries N-linked (GlcNAc...) asparagine glycosylation. Asp-312 is an active-site residue. An N-linked (GlcNAc...) asparagine glycan is attached at Asn-380.

Belongs to the peptidase A1 family.

The protein localises to the secreted. The chain is Putative aspergillopepsin A-like aspartic endopeptidase AFUA_2G15950 from Aspergillus fumigatus (strain ATCC MYA-4609 / CBS 101355 / FGSC A1100 / Af293) (Neosartorya fumigata).